A 419-amino-acid polypeptide reads, in one-letter code: Serine hydroxymethyltransferase (419 aa).

(6S)-5,6,7,8-tetrahydrofolate contacts are provided by residues Leu-121 and 125 to 127; that span reads GHL. Lys-230 is modified (N6-(pyridoxal phosphate)lysine). Residues Glu-246 and 355–357 contribute to the (6S)-5,6,7,8-tetrahydrofolate site; that span reads SPF.

It belongs to the SHMT family. Homodimer. It depends on pyridoxal 5'-phosphate as a cofactor.

It is found in the cytoplasm. The enzyme catalyses (6R)-5,10-methylene-5,6,7,8-tetrahydrofolate + glycine + H2O = (6S)-5,6,7,8-tetrahydrofolate + L-serine. It participates in one-carbon metabolism; tetrahydrofolate interconversion. The protein operates within amino-acid biosynthesis; glycine biosynthesis; glycine from L-serine: step 1/1. Its function is as follows. Catalyzes the reversible interconversion of serine and glycine with tetrahydrofolate (THF) serving as the one-carbon carrier. This reaction serves as the major source of one-carbon groups required for the biosynthesis of purines, thymidylate, methionine, and other important biomolecules. Also exhibits THF-independent aldolase activity toward beta-hydroxyamino acids, producing glycine and aldehydes, via a retro-aldol mechanism. This chain is Serine hydroxymethyltransferase, found in Streptococcus suis (strain 98HAH33).